The sequence spans 793 residues: Peroxidase-like protein (793 aa).

Residues 1–20 (MNLFICHVFLLLLHGYLIIC) form the signal peptide.

The protein belongs to the peroxidase family. As to expression, prismatic layer of shell (at protein level). Expressed primarily in the mantle with highest level in the mantle edge and lower level in the mantle pallium.

The protein resides in the secreted. The polypeptide is Peroxidase-like protein (Margaritifera margaritifera (Freshwater pearl mussel)).